The sequence spans 654 residues: Coiled-coil domain-containing protein 81 (654 aa).

The tract at residues 196–270 (SRESYRKRPN…RERQSISPAK (75 aa)) is disordered. At Ser206 the chain carries Phosphoserine. 2 stretches are compositionally biased toward basic and acidic residues: residues 212 to 222 (RIEHKETENKT) and 232 to 251 (GENR…EGGA). Phosphoserine is present on residues Ser273, Ser275, Ser296, and Ser419. The span at 293–302 (ENLSSPGCQR) shows a compositional bias: polar residues. Positions 293-318 (ENLSSPGCQRNDNERPRTSPAPACQD) are disordered. Positions 431-562 (SQSLLKQMES…QRRDLQMLQR (132 aa)) form a coiled coil.

Its subcellular location is the cytoplasm. It is found in the cytoskeleton. The protein localises to the microtubule organizing center. It localises to the centrosome. In Mus musculus (Mouse), this protein is Coiled-coil domain-containing protein 81 (Ccdc81).